A 630-amino-acid polypeptide reads, in one-letter code: Chaperone protein HtpG (630 aa).

The a; substrate-binding stretch occupies residues 1-339 (MSHTETHAFQ…SNDLPLNVSR (339 aa)). The b stretch occupies residues 340–556 (EILQSNRVVD…EGDISAHMAR (217 aa)). The segment at 557-630 (MMEQMGQAMP…RMNALLSEVI (74 aa)) is c.

It belongs to the heat shock protein 90 family. As to quaternary structure, homodimer.

It localises to the cytoplasm. Its function is as follows. Molecular chaperone. Has ATPase activity. The polypeptide is Chaperone protein HtpG (Hydrogenovibrio crunogenus (strain DSM 25203 / XCL-2) (Thiomicrospira crunogena)).